The primary structure comprises 272 residues: Small ribosomal subunit protein uS3 (272 aa).

Positions 43-111 (IRELMTTGME…QIQLNILEVK (69 aa)) constitute a KH type-2 domain. Residues 218 to 272 (AKEAAQPSGRGRGGERRGGGERRRRNDRAERAPRQENAGAGAETPAAAPAEGGNA) are disordered. The span at 229–238 (RGGERRGGGE) shows a compositional bias: basic and acidic residues. Residues 253 to 272 (ENAGAGAETPAAAPAEGGNA) show a composition bias toward low complexity.

Belongs to the universal ribosomal protein uS3 family. Part of the 30S ribosomal subunit. Forms a tight complex with proteins S10 and S14.

Its function is as follows. Binds the lower part of the 30S subunit head. Binds mRNA in the 70S ribosome, positioning it for translation. This Micrococcus luteus (strain ATCC 4698 / DSM 20030 / JCM 1464 / CCM 169 / CCUG 5858 / IAM 1056 / NBRC 3333 / NCIMB 9278 / NCTC 2665 / VKM Ac-2230) (Micrococcus lysodeikticus) protein is Small ribosomal subunit protein uS3.